The primary structure comprises 122 residues: Small ribosomal subunit protein uS13 (122 aa).

Positions 97-122 (PVRGQRTHTNARTRKGPAKAIAGKKK) are disordered.

This sequence belongs to the universal ribosomal protein uS13 family. In terms of assembly, part of the 30S ribosomal subunit. Forms a loose heterodimer with protein S19. Forms two bridges to the 50S subunit in the 70S ribosome.

Located at the top of the head of the 30S subunit, it contacts several helices of the 16S rRNA. In the 70S ribosome it contacts the 23S rRNA (bridge B1a) and protein L5 of the 50S subunit (bridge B1b), connecting the 2 subunits; these bridges are implicated in subunit movement. Contacts the tRNAs in the A and P-sites. In Bartonella quintana (strain Toulouse) (Rochalimaea quintana), this protein is Small ribosomal subunit protein uS13.